The primary structure comprises 122 residues: Small ribosomal subunit protein uS13 (122 aa).

Positions 92 to 122 (HRRGLPVRGQRTHTNARTRKGPAKPIAGKKK) are disordered.

Belongs to the universal ribosomal protein uS13 family. Part of the 30S ribosomal subunit. Forms a loose heterodimer with protein S19. Forms two bridges to the 50S subunit in the 70S ribosome.

Located at the top of the head of the 30S subunit, it contacts several helices of the 16S rRNA. In the 70S ribosome it contacts the 23S rRNA (bridge B1a) and protein L5 of the 50S subunit (bridge B1b), connecting the 2 subunits; these bridges are implicated in subunit movement. Contacts the tRNAs in the A and P-sites. In Paracoccus denitrificans (strain Pd 1222), this protein is Small ribosomal subunit protein uS13.